The sequence spans 458 residues: Cysteine--tRNA ligase (458 aa).

C33 serves as a coordination point for Zn(2+). The 'HIGH' region motif lies at 35 to 45; the sequence is PTVYDFAHIGN. C221, H246, and E250 together coordinate Zn(2+). The short motif at 279–283 is the 'KMSKS' region element; the sequence is KMSKS. K282 is a binding site for ATP.

This sequence belongs to the class-I aminoacyl-tRNA synthetase family. Monomer. Zn(2+) is required as a cofactor.

It is found in the cytoplasm. It carries out the reaction tRNA(Cys) + L-cysteine + ATP = L-cysteinyl-tRNA(Cys) + AMP + diphosphate. This Rhizobium etli (strain ATCC 51251 / DSM 11541 / JCM 21823 / NBRC 15573 / CFN 42) protein is Cysteine--tRNA ligase.